Consider the following 112-residue polypeptide: Peptidyl-prolyl cis-trans isomerase FKBP12 (112 aa).

The tract at residues 1-22 (MGVEKQIIRAGTGPNPSRGQNV) is disordered. The PPIase FKBP-type domain occupies 19 to 112 (GQNVTVHCTG…EFEIEVLRAQ (94 aa)). Cys26 and Cys80 are oxidised to a cystine.

The protein belongs to the FKBP-type PPIase family. As to quaternary structure, interacts with FK506.

Its subcellular location is the cytoplasm. It carries out the reaction [protein]-peptidylproline (omega=180) = [protein]-peptidylproline (omega=0). Functionally, PPIases accelerate the folding of proteins. It catalyzes the cis-trans isomerization of proline imidic peptide bonds in oligopeptides. The protein is Peptidyl-prolyl cis-trans isomerase FKBP12 (FKBP12) of Vicia faba (Broad bean).